We begin with the raw amino-acid sequence, 161 residues long: Disulfide bond formation protein B (161 aa).

The Cytoplasmic portion of the chain corresponds to 1-8; that stretch reads MQANSRAY. Residues 9-25 form a helical membrane-spanning segment; that stretch reads FLLIALVSFGLVGVALY. Residues 26–43 are Periplasmic-facing; sequence LQFEKGYQPCPLCVMQRF. Cysteines 35 and 38 form a disulfide. The helical transmembrane segment at 44-58 threads the bilayer; that stretch reads AFIGIGIFSLLAAVA. Topologically, residues 59–63 are cytoplasmic; sequence QNTRS. The helical transmembrane segment at 64 to 81 threads the bilayer; the sequence is LWQGLGMLSGIAGIAVAV. Topologically, residues 82–136 are periplasmic; the sequence is YHVSLLLNPKASCGIDPLENWVNALPTAKALPQVFYADGLCTAPLPPVLGLSVPA. Cys-94 and Cys-122 are disulfide-bonded. The helical transmembrane segment at 137-155 threads the bilayer; that stretch reads WSLIWLFILTLTLAVGLIR. Over 156-161 the chain is Cytoplasmic; that stretch reads REKNFR.

The protein belongs to the DsbB family.

It localises to the cell inner membrane. Its function is as follows. Required for disulfide bond formation in some periplasmic proteins. Acts by oxidizing the DsbA protein. This chain is Disulfide bond formation protein B, found in Cupriavidus necator (strain ATCC 17699 / DSM 428 / KCTC 22496 / NCIMB 10442 / H16 / Stanier 337) (Ralstonia eutropha).